The sequence spans 488 residues: UDP-N-acetylmuramoyl-L-alanyl-D-glutamate--2,6-diaminopimelate ligase (488 aa).

UDP-N-acetyl-alpha-D-muramoyl-L-alanyl-D-glutamate contacts are provided by residues Leu24, Ser26, and 41 to 43; that span reads HQV. 113–119 is a binding site for ATP; it reads GTNGKTT. UDP-N-acetyl-alpha-D-muramoyl-L-alanyl-D-glutamate is bound by residues Asn154, 155–156, Ser182, Gln188, and Arg190; that span reads TT. Lys222 carries the N6-carboxylysine modification. Residues Arg386, 410-413, Gly461, and Glu465 each bind meso-2,6-diaminopimelate; that span reads DNPR. The Meso-diaminopimelate recognition motif signature appears at 410–413; sequence DNPR.

Belongs to the MurCDEF family. MurE subfamily. Requires Mg(2+) as cofactor. In terms of processing, carboxylation is probably crucial for Mg(2+) binding and, consequently, for the gamma-phosphate positioning of ATP.

Its subcellular location is the cytoplasm. It catalyses the reaction UDP-N-acetyl-alpha-D-muramoyl-L-alanyl-D-glutamate + meso-2,6-diaminopimelate + ATP = UDP-N-acetyl-alpha-D-muramoyl-L-alanyl-gamma-D-glutamyl-meso-2,6-diaminopimelate + ADP + phosphate + H(+). The protein operates within cell wall biogenesis; peptidoglycan biosynthesis. Functionally, catalyzes the addition of meso-diaminopimelic acid to the nucleotide precursor UDP-N-acetylmuramoyl-L-alanyl-D-glutamate (UMAG) in the biosynthesis of bacterial cell-wall peptidoglycan. The chain is UDP-N-acetylmuramoyl-L-alanyl-D-glutamate--2,6-diaminopimelate ligase from Haemophilus influenzae (strain ATCC 51907 / DSM 11121 / KW20 / Rd).